A 100-amino-acid chain; its full sequence is RxLR effector protein SFI8 (100 aa).

The signal sequence occupies residues 1 to 22; that stretch reads MRSILYAVLAFAVLARSSAVAA. Residues 43-57 carry the RxLR-dEER motif; the sequence is RSLRVEAQEVIQSGR. A Calmodulin-binding motif motif is present at residues 78–82; sequence KPDIK.

The protein belongs to the RxLR effector family. Interacts with the host calmodulin.

The protein localises to the secreted. It localises to the host nucleus. The protein resides in the host cytoplasm. Its function is as follows. Effector that suppresses flg22-induced post-translational MAP kinase activation both tomato and Arabidopsis. The perception of highly conserved pathogen- or microbe-associated molecular patterns (PAMPs/MAMPs), such as flg22, triggers converging signaling pathways recruiting MAP kinase cascades and inducing transcriptional re-programming, yielding a generic antimicrobial response. Associates with calmodulin to interfere with plant defense-associated calcium signaling in hosts. The sequence is that of RxLR effector protein SFI8 from Phytophthora infestans (strain T30-4) (Potato late blight agent).